The primary structure comprises 301 residues: Protein SCO1 homolog, mitochondrial (301 aa).

Residues 1–67 (MAMLVLVPGR…PGYCLGTRPL (67 aa)) constitute a mitochondrion transit peptide. The interval 63–91 (GTRPLSTARPPPPWSQKGPGDSTRPSKPG) is disordered. Over 68–92 (STARPPPPWSQKGPGDSTRPSKPGP) the chain is Mitochondrial matrix. A helical membrane pass occupies residues 93 to 111 (VSWKSLAITFAIGGALLAG). Over 112-301 (MKHVKKEKAE…THMRPYRKKS (190 aa)) the chain is Mitochondrial intermembrane. Residues 118 to 131 (EKAEKLEKERQRHI) form an important for dimerization region. Cu cation contacts are provided by cysteine 169, cysteine 173, and histidine 260. Cysteine 169 and cysteine 173 form a disulfide bridge.

Belongs to the SCO1/2 family. In terms of assembly, homodimer. Interacts with COA6. Found in a complex with TMEM177, COX20, COA6, MT-CO2/COX2, COX18 and SCO2. Interacts with TMEM177 in a COX20-dependent manner. Interacts with COX20 in a MT-CO2/COX2- and COX18-dependent manner. Interacts with COX16. As to expression, predominantly expressed in tissues characterized by high rates of oxidative phosphorylation (OxPhos), including muscle, heart, and brain.

It is found in the mitochondrion. Its subcellular location is the mitochondrion inner membrane. Its function is as follows. Copper metallochaperone essential for the maturation of cytochrome c oxidase subunit II (MT-CO2/COX2). Not required for the synthesis of MT-CO2/COX2 but plays a crucial role in stabilizing MT-CO2/COX2 during its subsequent maturation. Involved in transporting copper to the Cu(A) site on MT-CO2/COX2. Plays an important role in the regulation of copper homeostasis by controlling the abundance and cell membrane localization of copper transporter CTR1. The polypeptide is Protein SCO1 homolog, mitochondrial (SCO1) (Homo sapiens (Human)).